Here is a 130-residue protein sequence, read N- to C-terminus: RxLR effector protein PITG_14783 (130 aa).

An N-terminal signal peptide occupies residues 1 to 20 (MRLPYVFAATMATLLVSSNA). A disordered region spans residues 27 to 58 (AMLSSPNEQHQRQLRSHQTPVEDQEPDEERSL). The RxLR-dEER motif lies at 38–56 (RQLRSHQTPVEDQEPDEER).

It belongs to the RxLR effector family.

The protein resides in the secreted. Its subcellular location is the host nucleus. The protein localises to the host cytoplasm. In terms of biological role, effector that enhances P.infestans colonization of Nicotiana benthamiana leaves. This is RxLR effector protein PITG_14783 from Phytophthora infestans (strain T30-4) (Potato late blight agent).